We begin with the raw amino-acid sequence, 235 residues long: Ferric nitrobindin-like protein (235 aa).

The interval 1 to 59 (MSDLASEGSDPAERASEHSNGNAPADRPARRSGDQAVADAAERAKATGSRNIPVLPDLP) is disordered. The GXWXGXG signature appears at 85–91 (GVWRGEG).

Belongs to the nitrobindin family.

In Nocardia farcinica (strain IFM 10152), this protein is Ferric nitrobindin-like protein.